A 315-amino-acid chain; its full sequence is Protein phosphatase PTC7 homolog fig (315 aa).

One can recognise a PPM-type phosphatase domain in the interval 54–309 (KHSIASAKDN…DDITVILATV (256 aa)). Residues Asp86, Gly87, and Asp231 each contribute to the Mn(2+) site.

This sequence belongs to the PP2C family. The cofactor is Mg(2+). Mn(2+) is required as a cofactor.

It carries out the reaction O-phospho-L-seryl-[protein] + H2O = L-seryl-[protein] + phosphate. The enzyme catalyses O-phospho-L-threonyl-[protein] + H2O = L-threonyl-[protein] + phosphate. This chain is Protein phosphatase PTC7 homolog fig, found in Drosophila willistoni (Fruit fly).